Here is a 711-residue protein sequence, read N- to C-terminus: Polyribonucleotide nucleotidyltransferase (711 aa).

Mg(2+) contacts are provided by aspartate 489 and aspartate 495. In terms of domain architecture, KH spans 556-615 (PRIHTIKISPDKIKDVIGKGGSVIRALTEETGTTIEIEDDGTVKIAATDGEKAKHAIRRI). The 69-residue stretch at 625–693 (GRIYNGKVTR…RQGRVRLSIK (69 aa)) folds into the S1 motif domain.

It belongs to the polyribonucleotide nucleotidyltransferase family. As to quaternary structure, component of the RNA degradosome, which is a multiprotein complex involved in RNA processing and mRNA degradation. Requires Mg(2+) as cofactor.

Its subcellular location is the cytoplasm. It catalyses the reaction RNA(n+1) + phosphate = RNA(n) + a ribonucleoside 5'-diphosphate. Involved in mRNA degradation. Catalyzes the phosphorolysis of single-stranded polyribonucleotides processively in the 3'- to 5'-direction. This Cronobacter sakazakii (strain ATCC BAA-894) (Enterobacter sakazakii) protein is Polyribonucleotide nucleotidyltransferase.